The primary structure comprises 342 residues: tRNA N6-adenosine threonylcarbamoyltransferase (342 aa).

Residues histidine 111 and histidine 115 each coordinate Fe cation. Residues 134-138 (LVSGG), aspartate 167, glycine 180, and asparagine 277 contribute to the substrate site. Aspartate 305 contacts Fe cation.

It belongs to the KAE1 / TsaD family. Fe(2+) serves as cofactor.

It localises to the cytoplasm. The catalysed reaction is L-threonylcarbamoyladenylate + adenosine(37) in tRNA = N(6)-L-threonylcarbamoyladenosine(37) in tRNA + AMP + H(+). Its function is as follows. Required for the formation of a threonylcarbamoyl group on adenosine at position 37 (t(6)A37) in tRNAs that read codons beginning with adenine. Is involved in the transfer of the threonylcarbamoyl moiety of threonylcarbamoyl-AMP (TC-AMP) to the N6 group of A37, together with TsaE and TsaB. TsaD likely plays a direct catalytic role in this reaction. The chain is tRNA N6-adenosine threonylcarbamoyltransferase from Histophilus somni (strain 2336) (Haemophilus somnus).